The primary structure comprises 372 residues: GTPase Obg (372 aa).

The Obg domain occupies 1–159 (MKFIDEARIE…RMLKLELKVL (159 aa)). The interval 128 to 147 (LHFKSSTNRAPRQKTDGKPG) is disordered. An OBG-type G domain is found at 160-334 (ADVGLLGMPN…LVYAIHDYLV (175 aa)). GTP is bound by residues 166–173 (GMPNAGKS), 191–195 (FTTLA), 213–216 (DIPG), 284–287 (NKLD), and 315–317 (SAL). Residues Ser-173 and Thr-193 each contribute to the Mg(2+) site.

This sequence belongs to the TRAFAC class OBG-HflX-like GTPase superfamily. OBG GTPase family. In terms of assembly, monomer. Mg(2+) is required as a cofactor.

It localises to the cytoplasm. In terms of biological role, an essential GTPase which binds GTP, GDP and possibly (p)ppGpp with moderate affinity, with high nucleotide exchange rates and a fairly low GTP hydrolysis rate. Plays a role in control of the cell cycle, stress response, ribosome biogenesis and in those bacteria that undergo differentiation, in morphogenesis control. The sequence is that of GTPase Obg from Burkholderia pseudomallei (strain 668).